A 146-amino-acid chain; its full sequence is Anti-sigma F factor (146 aa).

It belongs to the anti-sigma-factor family.

The enzyme catalyses L-seryl-[protein] + ATP = O-phospho-L-seryl-[protein] + ADP + H(+). It carries out the reaction L-threonyl-[protein] + ATP = O-phospho-L-threonyl-[protein] + ADP + H(+). Binds to sigma F and blocks its ability to form an RNA polymerase holoenzyme (E-sigma F). Phosphorylates SpoIIAA on a serine residue. This phosphorylation may enable SpoIIAA to act as an anti-anti-sigma factor that counteracts SpoIIAB and thus releases sigma F from inhibition. This chain is Anti-sigma F factor, found in Geobacillus kaustophilus (strain HTA426).